Consider the following 293-residue polypeptide: Homeobox protein ceh-24 (293 aa).

Basic and acidic residues-rich tracts occupy residues 1–15 (MSEK…KKDE) and 22–38 (QETK…MKIK). Disordered stretches follow at residues 1–38 (MSEK…MKIK) and 203–256 (EKEK…SNGV). The homeobox DNA-binding region spans 144–203 (RRKRRVLFSQAQVYELERRFKQAKYLTAPEREQLANSIRLTPTQVKIWFQNHRYKCKRQE).

Belongs to the NK-2 homeobox family. Expressed in the 8 vulval muscles, 8-10 ventral neurons in the head and in the most posterior pharyngeal muscle cell, m8.

Its subcellular location is the nucleus. Probable transcriptional regulator that is required in neural development for the normal formation of sublateral cholinergic motor neuron processes. Plays a role in regulating the expression of acetylcholine transporter protein unc-17 in the sublateral processes. In particular, it is required in sublateral motor neurons for a left-right turning behavior that occurs during the lethargus phase of the normal sleep process called 'flipping'. During 'flipping' animals rotate 180 degrees about their longitudinal axis. The protein is Homeobox protein ceh-24 of Caenorhabditis briggsae.